Consider the following 58-residue polypeptide: Large ribosomal subunit protein bL32 (58 aa).

Residues 1–20 (MALPKHKKSKSKRDKRRTHQ) show a composition bias toward basic residues. The tract at residues 1 to 26 (MALPKHKKSKSKRDKRRTHQKLTAPN) is disordered.

The protein belongs to the bacterial ribosomal protein bL32 family.

This chain is Large ribosomal subunit protein bL32, found in Desulfatibacillum aliphaticivorans.